The sequence spans 279 residues: NLP effector protein 9 (279 aa).

An N-terminal signal peptide occupies residues 1–19 (MKISNLLGVLVVFLAVVKG). Residues 151–161 (AIMYAWYFPDI) carry the Conserved undecapeptide motif motif. N-linked (GlcNAc...) asparagine glycosylation occurs at Asn-176.

It belongs to the Necrosis inducing protein (NPP1) family.

It localises to the secreted. Functionally, secreted effector that acts as a pathogen-associated molecular pattern (PAMP) recognized by the plant immune system. Seems not to induce necrosis in Nicotiana benthamiana leaves. The polypeptide is NLP effector protein 9 (Plasmopara viticola (Downy mildew of grapevine)).